The following is a 68-amino-acid chain: Phylloseptin-SP1 (68 aa).

Positions 1–22 are cleaved as a signal peptide; it reads MAFLKKSLFLVLFLGLVSLSIC. A propeptide spanning residues 23–45 is cleaved from the precursor; sequence EEKERETKEEENEQEDDNREEKR. Leucine 67 is modified (leucine amide).

Expressed by the skin glands.

The protein localises to the secreted. Its function is as follows. Weak cationic amphipathic alpha-helical antimicrobial peptide with weak activity against Gram-positive and Gram-negative bacteria and fungi. Has been tested against E.coli (MIC&gt;217.69 uM), S.aureus (MIC&gt;217.69 uM), K.pneumoniae (MIC&gt;189.00 uM) and C.albicans (MIC&gt;217.69 uM). Shows a moderate hemolytic activity. The polypeptide is Phylloseptin-SP1 (Agalychnis spurrelli (Gliding leaf frog)).